The following is a 129-amino-acid chain: Small ribosomal subunit protein uS9 (129 aa).

The interval 107 to 129 (SRVVERKKPGKKKARRSPQFSKR) is disordered. The span at 114 to 129 (KPGKKKARRSPQFSKR) shows a compositional bias: basic residues.

It belongs to the universal ribosomal protein uS9 family.

The protein is Small ribosomal subunit protein uS9 of Sulfurovum sp. (strain NBC37-1).